Consider the following 198-residue polypeptide: Sorcin (198 aa).

EF-hand domains follow at residues 45-64 (QDGQIDADELQRCLTQSGIA), 70-98 (FNLETCRLMVSMLDRDMSGTMGFNEFKEL), 100-135 (AVLNGWRQHFISFDSDRSGTVDPQELQKALTTMGFR), and 151-169 (SGKITFDDYIACCVKLRAL). Positions 83, 85, 87, 89, 94, 113, 115, 117, 119, and 124 each coordinate Ca(2+). S178 bears the Phosphoserine mark.

As to quaternary structure, homodimer. Interacts with GCA, RYR2 and ANXA7. As to expression, detected in cardiac myocytes.

The protein resides in the cytoplasm. It is found in the sarcoplasmic reticulum membrane. Functionally, calcium-binding protein that modulates excitation-contraction coupling in the heart. Contributes to calcium homeostasis in the heart sarcoplasmic reticulum. Modulates the activity of RYR2 calcium channels. The protein is Sorcin (Sri) of Mus musculus (Mouse).